The following is a 332-amino-acid chain: MAASELIDTFGRRISYLRLSVTDRCDLRCTYCMPERMQFLPRAEVLTLEELRDLAVGFMRRGITKIRLTGGEPLVRRDVVDLIRALGRHVGDGLEELTLTTNGTQLAGHAQAIADAGVKRINISLDTLDRATFQRLSRRDALASVLGGIAAAKAAGLKIKINTVAMKGVNGHEIPALIEWAHGEGHDVTLIETMPLGEVDEDRTDQFLPLVAVRESLEARWTLTDSDHRTGGPSRYVEVAETGGRLGFITPLTNNFCAGCNRVRVTATGQLYPCLGGGERVDLRAALRSDDPDSNLSTALDTAMKIKPERHDFRIGEGEEPALARHMSMTGG.

Positions 9-234 constitute a Radical SAM core domain; sequence TFGRRISYLR…DSDHRTGGPS (226 aa). Arginine 18 contributes to the GTP binding site. The [4Fe-4S] cluster site is built by cysteine 25 and cysteine 29. Tyrosine 31 lines the S-adenosyl-L-methionine pocket. Cysteine 32 lines the [4Fe-4S] cluster pocket. Position 67 (arginine 67) interacts with GTP. Residue glycine 71 participates in S-adenosyl-L-methionine binding. Threonine 100 provides a ligand contact to GTP. Serine 124 provides a ligand contact to S-adenosyl-L-methionine. Lysine 160 is a binding site for GTP. Methionine 194 serves as a coordination point for S-adenosyl-L-methionine. Residues cysteine 257 and cysteine 260 each contribute to the [4Fe-4S] cluster site. A GTP-binding site is contributed by 262–264; sequence RVR. Cysteine 274 is a [4Fe-4S] cluster binding site.

Belongs to the radical SAM superfamily. MoaA family. As to quaternary structure, monomer and homodimer. [4Fe-4S] cluster serves as cofactor.

It catalyses the reaction GTP + AH2 + S-adenosyl-L-methionine = (8S)-3',8-cyclo-7,8-dihydroguanosine 5'-triphosphate + 5'-deoxyadenosine + L-methionine + A + H(+). The protein operates within cofactor biosynthesis; molybdopterin biosynthesis. In terms of biological role, catalyzes the cyclization of GTP to (8S)-3',8-cyclo-7,8-dihydroguanosine 5'-triphosphate. The chain is GTP 3',8-cyclase from Erythrobacter litoralis (strain HTCC2594).